The following is a 948-amino-acid chain: Isoleucine--tRNA ligase (948 aa).

Positions proline 58–histidine 68 match the 'HIGH' region motif. Glutamate 572 contributes to the L-isoleucyl-5'-AMP binding site. The 'KMSKS' region signature appears at lysine 613 to serine 617. Lysine 616 is an ATP binding site. Cysteine 911, cysteine 914, cysteine 931, and cysteine 934 together coordinate Zn(2+).

Belongs to the class-I aminoacyl-tRNA synthetase family. IleS type 1 subfamily. In terms of assembly, monomer. Zn(2+) serves as cofactor.

The protein resides in the cytoplasm. It carries out the reaction tRNA(Ile) + L-isoleucine + ATP = L-isoleucyl-tRNA(Ile) + AMP + diphosphate. Functionally, catalyzes the attachment of isoleucine to tRNA(Ile). As IleRS can inadvertently accommodate and process structurally similar amino acids such as valine, to avoid such errors it has two additional distinct tRNA(Ile)-dependent editing activities. One activity is designated as 'pretransfer' editing and involves the hydrolysis of activated Val-AMP. The other activity is designated 'posttransfer' editing and involves deacylation of mischarged Val-tRNA(Ile). This Edwardsiella ictaluri (strain 93-146) protein is Isoleucine--tRNA ligase.